We begin with the raw amino-acid sequence, 279 residues long: Estrogen receptor beta (279 aa).

An NR LBD domain is found at 27 to 261; that stretch reads SPEQLVLTLL…DLLLEMLNAH (235 aa).

This sequence belongs to the nuclear hormone receptor family. NR3 subfamily. In terms of assembly, binds DNA as a homodimer. Can form a heterodimer with ESR1. Interacts with NCOA1, NCOA3, NCOA5 and NCOA6 coactivators, leading to a strong increase of transcription of target genes. Interacts with UBE1C and AKAP13. Interacts with DNTTIP2. Interacts with CCDC62 in the presence of estradiol/E2; this interaction seems to enhance the transcription of target genes. Interacts with DNAAF4. Interacts with PRMT2. Interacts with CCAR2 (via N-terminus) in a ligand-independent manner. Interacts with RBM39, in the presence of estradiol (E2). Interacts with STUB1/CHIP.

It is found in the nucleus. Nuclear hormone receptor. Binds estrogens with an affinity similar to that of ESR1/ER-alpha, and activates expression of reporter genes containing estrogen response elements (ERE) in an estrogen-dependent manner. This chain is Estrogen receptor beta (ESR2), found in Macaca mulatta (Rhesus macaque).